Consider the following 95-residue polypeptide: Large ribosomal subunit protein bL27 (95 aa).

The tract at residues 1 to 21 is disordered; that stretch reads MAHKKGASSSRNGRDSNAQRL. Residues 7–19 show a composition bias toward polar residues; the sequence is ASSSRNGRDSNAQ.

The protein belongs to the bacterial ribosomal protein bL27 family.

This Parafrankia sp. (strain EAN1pec) protein is Large ribosomal subunit protein bL27.